Reading from the N-terminus, the 175-residue chain is MELSVVGGEPLLAVAMQQLLDLDLPDELERQLNPPTRAYVRDRRAMANTPMDVKELRASGALVLAVDMPGVAPADVRVEVEDGNVLAISGERRRPAGDGDDGGEGVKYLRMERRMGKFMRRFPLPESADLDGVRAEYKDGVLTVTVDKKPPPEPKKPRVVEVKVAGAGEPKGKGK.

The 124-residue stretch at 42–165 (DRRAMANTPM…KPRVVEVKVA (124 aa)) folds into the sHSP domain. A disordered region spans residues 145 to 175 (TVDKKPPPEPKKPRVVEVKVAGAGEPKGKGK). Basic and acidic residues predominate over residues 146–161 (VDKKPPPEPKKPRVVE).

This sequence belongs to the small heat shock protein (HSP20) family. As to quaternary structure, may form oligomeric structures.

It is found in the cytoplasm. This chain is 19.0 kDa class II heat shock protein (HSP19.0), found in Oryza sativa subsp. japonica (Rice).